A 151-amino-acid polypeptide reads, in one-letter code: UPF0178 protein Spea_2958 (151 aa).

The protein belongs to the UPF0178 family.

This chain is UPF0178 protein Spea_2958, found in Shewanella pealeana (strain ATCC 700345 / ANG-SQ1).